Consider the following 352-residue polypeptide: Histidinol-phosphate aminotransferase (352 aa).

Residue lysine 211 is modified to N6-(pyridoxal phosphate)lysine.

The protein belongs to the class-II pyridoxal-phosphate-dependent aminotransferase family. Histidinol-phosphate aminotransferase subfamily. Homodimer. Pyridoxal 5'-phosphate serves as cofactor.

The catalysed reaction is L-histidinol phosphate + 2-oxoglutarate = 3-(imidazol-4-yl)-2-oxopropyl phosphate + L-glutamate. It functions in the pathway amino-acid biosynthesis; L-histidine biosynthesis; L-histidine from 5-phospho-alpha-D-ribose 1-diphosphate: step 7/9. This is Histidinol-phosphate aminotransferase from Haemophilus influenzae (strain PittEE).